The chain runs to 2109 residues: Nonribosomal peptide synthetase sidE (2109 aa).

Residues 31–512 (LTPPSPPCLV…QNGKVDFRAI (482 aa)) are adenylation 1. A Carrier 1 domain is found at 537–613 (AGLSETASKI…EIADTVQLDS (77 aa)). Ser-574 carries the post-translational modification O-(pantetheine 4'-phosphoryl)serine. Positions 646-908 (DAYPVTALQE…LAVVPYAIAI (263 aa)) are condensation 1. The segment at 1058–1555 (RTLNGQFEAT…GKANRKQLKA (498 aa)) is adenylation 2. Positions 1584 to 1660 (PLASETQKVL…AMADQLKGES (77 aa)) constitute a Carrier 2 domain. At Ser-1621 the chain carries O-(pantetheine 4'-phosphoryl)serine. A condensation 2 region spans residues 1695–1968 (YPCPPGQAEF…NFLPMRSKVD (274 aa)).

This sequence belongs to the NRP synthetase family.

Its pathway is siderophore biosynthesis. Its function is as follows. Nonribosomal peptide synthetase; part of the siderophore biosynthetic pathway. Aspergillus fumigatus produces four types of siderophores, low-molecular-mass iron chelators, including excreted fusarinine C (FsC) and triacetylfusarinine C (TAFC) for iron uptake and intacellular ferricrocin (FC) for hyphal and hydroxyferricrocin (HFC) for conidial iron distribution and storage. TAFC consists of three N(2)-acetyl-N(5)-anhydromevalonyl-N(5)-hydroxyornithine residues cyclically linked by ester bonds; FC is a cyclic hexapeptide with the structure Gly-Ser-Gly-(N(5)-acetyl-N(5)-hydroxyornithine)x3. The biosynthesis of all four siderophores depends on the hydroxylation of ornithine, catalyzed by the monooxygenase sidA. Subsequently, the pathways for biosynthesis of extra- and intracellular siderophores split. For biosynthesis of extracellular siderophores, the transacylase sidF transfers anhydromevalonyl to N(5)-hydroxyornithine. The required anhydromevalonyl-CoA moiety is derived from mevalonate by CoA ligation and dehydration catalyzed by sidI and sidH respectively. The acetylation of N(5)-hydroxyornithine for FC biosynthesis involves the constitutively expressed sidL. FC is hydroxylated to HFC by an as yet uncharacterized enzyme during conidiation. Assembly of fusarinine C (FsC) and FC is catalyzed by two different nonribosomal peptide synthetases (NRPS), sidD and sidC respectively. Subsequently, sidG catalyzes N2-acetylation of FsC for forming TAFC. Both extra- and intracellular siderophores are crucial for growth during iron limitation and virulence. The sequence is that of Nonribosomal peptide synthetase sidE from Aspergillus fumigatus (strain ATCC MYA-4609 / CBS 101355 / FGSC A1100 / Af293) (Neosartorya fumigata).